A 639-amino-acid polypeptide reads, in one-letter code: DNA gyrase subunit B (639 aa).

Over residues 392–402 (QAEELTRRKSA) the composition is skewed to basic and acidic residues. The disordered stretch occupies residues 392 to 417 (QAEELTRRKSALESTSLPGKLADCQS). Residues 423-537 (SELFIVEGDS…AGYVYAAQPP (115 aa)) form the Toprim domain. Residues Glu429, Asp502, and Asp504 each coordinate Mg(2+).

This sequence belongs to the type II topoisomerase GyrB family. As to quaternary structure, heterotetramer, composed of two GyrA and two GyrB chains. In the heterotetramer, GyrA contains the active site tyrosine that forms a transient covalent intermediate with DNA, while GyrB binds cofactors and catalyzes ATP hydrolysis. The cofactor is Mg(2+). Mn(2+) serves as cofactor. Requires Ca(2+) as cofactor.

The protein resides in the cytoplasm. The catalysed reaction is ATP-dependent breakage, passage and rejoining of double-stranded DNA.. Its function is as follows. A type II topoisomerase that negatively supercoils closed circular double-stranded (ds) DNA in an ATP-dependent manner to modulate DNA topology and maintain chromosomes in an underwound state. Negative supercoiling favors strand separation, and DNA replication, transcription, recombination and repair, all of which involve strand separation. Also able to catalyze the interconversion of other topological isomers of dsDNA rings, including catenanes and knotted rings. Type II topoisomerases break and join 2 DNA strands simultaneously in an ATP-dependent manner. In Haloferax lucentense (strain DSM 14919 / JCM 9276 / NCIMB 13854 / Aa 2.2) (Haloferax alicantei), this protein is DNA gyrase subunit B.